The following is a 356-amino-acid chain: Dual-specificity RNA methyltransferase RlmN (356 aa).

The active-site Proton acceptor is glutamate 89. The region spanning 108–341 (SHARYTICVS…CTIRESKGLD (234 aa)) is the Radical SAM core domain. A disulfide bond links cysteine 115 and cysteine 346. [4Fe-4S] cluster contacts are provided by cysteine 122, cysteine 126, and cysteine 129. S-adenosyl-L-methionine-binding positions include 172 to 173 (GE), serine 204, 227 to 229 (SLH), and asparagine 303. The active-site S-methylcysteine intermediate is the cysteine 346.

This sequence belongs to the radical SAM superfamily. RlmN family. [4Fe-4S] cluster is required as a cofactor.

The protein resides in the cytoplasm. The catalysed reaction is adenosine(2503) in 23S rRNA + 2 reduced [2Fe-2S]-[ferredoxin] + 2 S-adenosyl-L-methionine = 2-methyladenosine(2503) in 23S rRNA + 5'-deoxyadenosine + L-methionine + 2 oxidized [2Fe-2S]-[ferredoxin] + S-adenosyl-L-homocysteine. It carries out the reaction adenosine(37) in tRNA + 2 reduced [2Fe-2S]-[ferredoxin] + 2 S-adenosyl-L-methionine = 2-methyladenosine(37) in tRNA + 5'-deoxyadenosine + L-methionine + 2 oxidized [2Fe-2S]-[ferredoxin] + S-adenosyl-L-homocysteine. Specifically methylates position 2 of adenine 2503 in 23S rRNA and position 2 of adenine 37 in tRNAs. m2A2503 modification seems to play a crucial role in the proofreading step occurring at the peptidyl transferase center and thus would serve to optimize ribosomal fidelity. The polypeptide is Dual-specificity RNA methyltransferase RlmN (Campylobacter jejuni subsp. jejuni serotype O:23/36 (strain 81-176)).